The sequence spans 966 residues: MAAHRIRATTNNNTSLPRCKSEGTLIDLSEGVSEASLTDVKVPSPSALRLDATASFGAAREVVAIKDCCPSSFTTLKFSKGDRLYVLDSSGAEWWYAHNNTEMGYIPAAYVEPINYRDSSFSDSGMIDTVGDCNEEAAKEMDLLGEWAGVILKPTTFQNGNPFAATNSSTNPFLNGGPQSPLDQNSNEKSVDLLLFDTLAPSVPNSTSITADINGFGSGVLNMNPLSPTVGVGQTLRRDNPFFRSKRSYSLSELSILQAQSDAPQASTGFFGGLKAPAPEQFQSREDFRTAWLTHRKLARSCHDLDSLGQNPGWGQTQPVETNIVCRLDSSGGAVQLPDANISIHIPEGHVAPGDTQQISIKALLDPPLELNNDRCTTVSPVVEIKLSNMEIRTTVTLEMKVSVVVKIESRQTTEILCVRSDCKEGPYTPIPQAYIYGDMVQVCLDNLEPCMYVCVVAQSKSIAPDSTVWEHVVKKITLGVYGPKHIHPSFKTVVAMFGHDCAPKTLLVSEVGKQAQAVPPVALQLWGKHQFVLSRPQDLRVGVYSNMANYEVKASEQARVVRGFQVKLGKVSRLVYVIASRNADDVSDFTLRIQIKDDQDCILAQFCVQTPTPPPKAGPKTSVQRRFLKKKEVGKIVLSPLAITTKYPVFQDRRINNLKFGKLIKTVIRQTKNQYLLEYKKGDFVALLSEEKIRLKGQLWTKEWYIGYYQGRLGFVHAKNVLVVGKVKPIYFSGPDLTTSLFLEQILKPCKFLTYIYASVRTILMENIGNWRAFADSLGYINLPLTHFCRAELDSEPERVASVLEKLKEDCNNTESKERKSFQKELLTALLKMDCQGLVARLVMDFVLLTTAVELAGRWRELAEKLAKVSRQQMDAYEAPHRDKSGVVDSEAMWKPAYDFLVTWAAQIGDSYRDVIQELHMGLDKMKNPITKRWKHLTGTLILVNCMDALRSSAFSPAAQDDCAI.

In terms of domain architecture, SH3 1 spans 57–116 (GAAREVVAIKDCCPSSFTTLKFSKGDRLYVLDSSGAEWWYAHNNTEMGYIPAAYVEPINY). Residues 322-457 (TNIVCRLDSS…LEPCMYVCVV (136 aa)) form the ZU5 domain. In terms of domain architecture, SH3 2 spans 657–727 (NNLKFGKLIK…HAKNVLVVGK (71 aa)).

Homodimer or homooligomer.

The protein localises to the membrane. It localises to the clathrin-coated pit. It is found in the cytoplasmic vesicle. The protein resides in the clathrin-coated vesicle. Its subcellular location is the nucleus. Its function is as follows. Possible role in regulating endocytosis of the transferrin receptor at the plasma membrane. Alternatively, may function as a negative regulator of the amino acid-induced TOR signaling by inhibiting the formation of active Rag GTPase complexes. Preferentially binds inactive Rag GTPase complexes and prevents their interaction with the mTORC1 complex inhibiting its relocalization to lysosomes and its activation. Thereby, may indirectly regulate cell growth, proliferation and autophagy. This Seriola quinqueradiata (Five-ray yellowtail) protein is SH3 domain-binding protein 4 (sh3bp4).